The chain runs to 123 residues: Small ribosomal subunit protein uS12 (123 aa).

Asp-89 carries the 3-methylthioaspartic acid modification. Positions 104-123 (SVGVKDRKKSRSKYGAKRPK) are disordered. The span at 109–123 (DRKKSRSKYGAKRPK) shows a compositional bias: basic residues.

Belongs to the universal ribosomal protein uS12 family. As to quaternary structure, part of the 30S ribosomal subunit. Contacts proteins S8 and S17. May interact with IF1 in the 30S initiation complex.

In terms of biological role, with S4 and S5 plays an important role in translational accuracy. Interacts with and stabilizes bases of the 16S rRNA that are involved in tRNA selection in the A site and with the mRNA backbone. Located at the interface of the 30S and 50S subunits, it traverses the body of the 30S subunit contacting proteins on the other side and probably holding the rRNA structure together. The combined cluster of proteins S8, S12 and S17 appears to hold together the shoulder and platform of the 30S subunit. In Pelobacter propionicus (strain DSM 2379 / NBRC 103807 / OttBd1), this protein is Small ribosomal subunit protein uS12.